Consider the following 424-residue polypeptide: Histidine--tRNA ligase (424 aa).

Belongs to the class-II aminoacyl-tRNA synthetase family. As to quaternary structure, homodimer.

It localises to the cytoplasm. The catalysed reaction is tRNA(His) + L-histidine + ATP = L-histidyl-tRNA(His) + AMP + diphosphate + H(+). The protein is Histidine--tRNA ligase of Yersinia pestis bv. Antiqua (strain Antiqua).